A 317-amino-acid polypeptide reads, in one-letter code: NAC domain-containing protein 19 (317 aa).

An NAC domain is found at 14–162 (LPPGFRFYPT…DWVLCRIYKK (149 aa)).

As to quaternary structure, dimer. Interacts with RHA2A, RHA2B or RHG1A, but not with RHA3A or RHA3B. Expressed in stems, flowers, cauline leaves and rosettes.

It localises to the nucleus. Functionally, transcription factors that bind specifically to the 5'-CATGTG-3' motif. This chain is NAC domain-containing protein 19 (NAC019), found in Arabidopsis thaliana (Mouse-ear cress).